Here is a 488-residue protein sequence, read N- to C-terminus: Bifunctional protein GlmU (488 aa).

Residues 1–237 form a pyrophosphorylase region; the sequence is MPRTRTPLAA…AEEASGVNDR (237 aa). UDP-N-acetyl-alpha-D-glucosamine is bound by residues 13–16, Lys-27, Gln-82, 87–88, 110–112, Gly-149, Glu-164, Asn-179, and Asn-235; these read LAAG, GT, and SGD. Asp-112 contributes to the Mg(2+) binding site. Asn-235 is a binding site for Mg(2+). The tract at residues 238 to 258 is linker; that stretch reads VELSRANRVMVGRLAEAFMRA. Residues 259 to 488 form an N-acetyltransferase region; the sequence is GVTIEDPARF…KGRPAARRAS (230 aa). Positions 341 and 359 each coordinate UDP-N-acetyl-alpha-D-glucosamine. The active-site Proton acceptor is His-371. UDP-N-acetyl-alpha-D-glucosamine is bound by residues Tyr-374 and Asn-385. Acetyl-CoA-binding positions include Ala-388, 394 to 395, Ser-413, Ala-431, and Arg-448; that span reads NY. The interval 459–488 is disordered; that stretch reads AQRQAEKQMKGTATGPASARKGRPAARRAS. Basic residues predominate over residues 478–488; sequence RKGRPAARRAS.

The protein in the N-terminal section; belongs to the N-acetylglucosamine-1-phosphate uridyltransferase family. It in the C-terminal section; belongs to the transferase hexapeptide repeat family. As to quaternary structure, homotrimer. Requires Mg(2+) as cofactor.

It localises to the cytoplasm. The enzyme catalyses alpha-D-glucosamine 1-phosphate + acetyl-CoA = N-acetyl-alpha-D-glucosamine 1-phosphate + CoA + H(+). The catalysed reaction is N-acetyl-alpha-D-glucosamine 1-phosphate + UTP + H(+) = UDP-N-acetyl-alpha-D-glucosamine + diphosphate. Its pathway is nucleotide-sugar biosynthesis; UDP-N-acetyl-alpha-D-glucosamine biosynthesis; N-acetyl-alpha-D-glucosamine 1-phosphate from alpha-D-glucosamine 6-phosphate (route II): step 2/2. It functions in the pathway nucleotide-sugar biosynthesis; UDP-N-acetyl-alpha-D-glucosamine biosynthesis; UDP-N-acetyl-alpha-D-glucosamine from N-acetyl-alpha-D-glucosamine 1-phosphate: step 1/1. It participates in bacterial outer membrane biogenesis; LPS lipid A biosynthesis. Its function is as follows. Catalyzes the last two sequential reactions in the de novo biosynthetic pathway for UDP-N-acetylglucosamine (UDP-GlcNAc). The C-terminal domain catalyzes the transfer of acetyl group from acetyl coenzyme A to glucosamine-1-phosphate (GlcN-1-P) to produce N-acetylglucosamine-1-phosphate (GlcNAc-1-P), which is converted into UDP-GlcNAc by the transfer of uridine 5-monophosphate (from uridine 5-triphosphate), a reaction catalyzed by the N-terminal domain. In Anaeromyxobacter dehalogenans (strain 2CP-1 / ATCC BAA-258), this protein is Bifunctional protein GlmU.